The following is a 295-amino-acid chain: ATP synthase gamma chain (295 aa).

The protein belongs to the ATPase gamma chain family. As to quaternary structure, F-type ATPases have 2 components, CF(1) - the catalytic core - and CF(0) - the membrane proton channel. CF(1) has five subunits: alpha(3), beta(3), gamma(1), delta(1), epsilon(1). CF(0) has three main subunits: a, b and c.

The protein resides in the cell membrane. In terms of biological role, produces ATP from ADP in the presence of a proton gradient across the membrane. The gamma chain is believed to be important in regulating ATPase activity and the flow of protons through the CF(0) complex. This Desulforudis audaxviator (strain MP104C) protein is ATP synthase gamma chain.